The sequence spans 581 residues: Protein FAM83D (581 aa).

The DUF1669 stretch occupies residues 1 to 297; it reads MALRYDGLDE…LYAQSKPISS (297 aa). The tract at residues 75–101 is disordered; that stretch reads PGEEGAAAGAEDSFGSSHDCSSGTYFP. Polar residues predominate over residues 88–98; the sequence is FGSSHDCSSGT. Ser296 bears the Phosphoserine mark. The interval 338 to 581 is required for interaction with KIF22 and function in chromosome congression; the sequence is TPRKVELGGE…REIMLYPSYQ (244 aa). 2 disordered regions span residues 366-401 and 426-503; these read EDYF…MSDV and QTVV…GPPK. Over residues 369–382 the composition is skewed to basic and acidic residues; it reads FSSRKDRLEGRRVT. The span at 426–438 shows a compositional bias: low complexity; the sequence is QTVVPTTSATTQT. Phosphoserine is present on Ser456. A compositionally biased stretch (low complexity) spans 462–488; the sequence is SVSRSSSLRSSSSLSSQGSVASSIGSQ. Thr507 is subject to Phosphothreonine.

Belongs to the FAM83 family. Interacts with FBXW7; promotes FBXW7 degradation. May interact with RAF1. Interacts with KIF22; recruits KIF22 to mitotic spindle microtubules. Interacts (via C-terminus) with DYNLL1. Interacts with HMMR. Directly interacts (via DUF1669) with CSNK1A1 and CSNK1A1L. In terms of processing, phosphorylated during mitosis.

The protein localises to the cytoplasm. Its subcellular location is the cytoskeleton. The protein resides in the spindle. It localises to the spindle pole. In terms of biological role, through the degradation of FBXW7, may act indirectly on the expression and downstream signaling of MTOR, JUN and MYC. May play also a role in cell proliferation through activation of the ERK1/ERK2 signaling cascade. May also be important for proper chromosome congression and alignment during mitosis through its interaction with KIF22. This Bos taurus (Bovine) protein is Protein FAM83D.